The sequence spans 237 residues: Probable Bax inhibitor 1 (237 aa).

At Met1–Asn29 the chain is on the cytoplasmic side. The helical transmembrane segment at Val30–Val50 threads the bilayer. The Lumenal portion of the chain corresponds to Thr51–Arg52. The chain crosses the membrane as a helical span at residues Leu53–Met73. Residues Thr74–Ala86 are Cytoplasmic-facing. The chain crosses the membrane as a helical span at residues Ile87–Ile107. Residues Ala108–Ser112 are Lumenal-facing. The chain crosses the membrane as a helical span at residues Ile113–Leu133. At Tyr134–Ser139 the chain is on the cytoplasmic side. Residues Tyr140 to Met160 form a helical membrane-spanning segment. Residues Asn161 to Ser166 lie on the Lumenal side of the membrane. A helical membrane pass occupies residues Val167–Xaa187. The Cytoplasmic segment spans residues Asp188 to His206. An intramembrane region (helical) is located at residues Ser207–Leu227. Residues Asn228–Lys237 are Cytoplasmic-facing.

Belongs to the BI1 family. In terms of tissue distribution, highly abundant in testis.

Its subcellular location is the endoplasmic reticulum membrane. Its function is as follows. Suppressor of apoptosis. Modulates unfolded protein response signaling. Modulate ER calcium homeostasis by acting as a calcium-leak channel. This Paralichthys olivaceus (Bastard halibut) protein is Probable Bax inhibitor 1 (tmbim6).